The primary structure comprises 512 residues: Maturase K (512 aa).

Belongs to the intron maturase 2 family. MatK subfamily.

It is found in the plastid. Its subcellular location is the chloroplast. Usually encoded in the trnK tRNA gene intron. Probably assists in splicing its own and other chloroplast group II introns. The polypeptide is Maturase K (Oenothera glazioviana (Large-flowered evening primrose)).